The sequence spans 382 residues: Succinate--CoA ligase [ADP-forming] subunit beta 1 (382 aa).

In terms of domain architecture, ATP-grasp spans 9–235 (KQIFAKHGIR…ATEEDPLERE (227 aa)). ATP-binding positions include Lys45, 52–54 (GRG), Glu91, Leu94, and Glu99. Mg(2+)-binding residues include Asn191 and Asp204. Asn255 is a substrate binding site.

This sequence belongs to the succinate/malate CoA ligase beta subunit family. Heterotetramer of two alpha and two beta subunits. It depends on Mg(2+) as a cofactor.

The enzyme catalyses succinate + ATP + CoA = succinyl-CoA + ADP + phosphate. It catalyses the reaction GTP + succinate + CoA = succinyl-CoA + GDP + phosphate. Its pathway is carbohydrate metabolism; tricarboxylic acid cycle; succinate from succinyl-CoA (ligase route): step 1/1. In terms of biological role, succinyl-CoA synthetase functions in the citric acid cycle (TCA), coupling the hydrolysis of succinyl-CoA to the synthesis of either ATP or GTP and thus represents the only step of substrate-level phosphorylation in the TCA. The beta subunit provides nucleotide specificity of the enzyme and binds the substrate succinate, while the binding sites for coenzyme A and phosphate are found in the alpha subunit. This Archaeoglobus fulgidus (strain ATCC 49558 / DSM 4304 / JCM 9628 / NBRC 100126 / VC-16) protein is Succinate--CoA ligase [ADP-forming] subunit beta 1.